A 72-amino-acid polypeptide reads, in one-letter code: Translation initiation factor IF-1 (72 aa).

The S1-like domain occupies Met1–Lys72.

The protein belongs to the IF-1 family. Component of the 30S ribosomal translation pre-initiation complex which assembles on the 30S ribosome in the order IF-2 and IF-3, IF-1 and N-formylmethionyl-tRNA(fMet); mRNA recruitment can occur at any time during PIC assembly.

The protein resides in the cytoplasm. In terms of biological role, one of the essential components for the initiation of protein synthesis. Stabilizes the binding of IF-2 and IF-3 on the 30S subunit to which N-formylmethionyl-tRNA(fMet) subsequently binds. Helps modulate mRNA selection, yielding the 30S pre-initiation complex (PIC). Upon addition of the 50S ribosomal subunit IF-1, IF-2 and IF-3 are released leaving the mature 70S translation initiation complex. In Leptospira borgpetersenii serovar Hardjo-bovis (strain L550), this protein is Translation initiation factor IF-1.